Consider the following 272-residue polypeptide: Endoplasmic reticulum resident protein 27 (272 aa).

A signal peptide spans 1–25; it reads MKITRSRCLILSFVLVCGLVPEVTA. The region spanning 39-152 is the Thioredoxin domain; sequence EPIWLTDVPA…WVTEYSPMIA (114 aa). N-linked (GlcNAc...) asparagine glycans are attached at residues N91 and N100. Positions 230-233 are PDIA3-binding site; the sequence is DKWD. Positions 269–272 match the Prevents secretion from ER motif; it reads KEEL.

This sequence belongs to the protein disulfide isomerase family. Interacts with PDIA3.

Its subcellular location is the endoplasmic reticulum lumen. In terms of biological role, specifically binds unfolded proteins and may recruit protein disulfide isomerase PDIA3 to unfolded substrates. Binds protein substrates via a hydrophobic pocket in the C-terminal domain. May play a role in the unfolded stress response. This is Endoplasmic reticulum resident protein 27 (Erp27) from Mus musculus (Mouse).